A 165-amino-acid polypeptide reads, in one-letter code: MVILGVDPGLAIVGYALIEKQGNKYRVIDYGSINTPSKLESVDRLKIIHTDMVNIINKYNPDQMAVEKLFFNKNVKTAIEVGQARGVILLAGSQARLKIYEYTPLQVKQAVAGYGRAHKSQVQRMVKALLNLNEIPKPDDVADALAISICHGNSYRLNRKWGTKG.

Residues aspartate 7, glutamate 67, and aspartate 140 contribute to the active site. Mg(2+) contacts are provided by aspartate 7, glutamate 67, and aspartate 140.

Belongs to the RuvC family. Homodimer which binds Holliday junction (HJ) DNA. The HJ becomes 2-fold symmetrical on binding to RuvC with unstacked arms; it has a different conformation from HJ DNA in complex with RuvA. In the full resolvosome a probable DNA-RuvA(4)-RuvB(12)-RuvC(2) complex forms which resolves the HJ. Requires Mg(2+) as cofactor.

The protein resides in the cytoplasm. It catalyses the reaction Endonucleolytic cleavage at a junction such as a reciprocal single-stranded crossover between two homologous DNA duplexes (Holliday junction).. Its function is as follows. The RuvA-RuvB-RuvC complex processes Holliday junction (HJ) DNA during genetic recombination and DNA repair. Endonuclease that resolves HJ intermediates. Cleaves cruciform DNA by making single-stranded nicks across the HJ at symmetrical positions within the homologous arms, yielding a 5'-phosphate and a 3'-hydroxyl group; requires a central core of homology in the junction. The consensus cleavage sequence is 5'-(A/T)TT(C/G)-3'. Cleavage occurs on the 3'-side of the TT dinucleotide at the point of strand exchange. HJ branch migration catalyzed by RuvA-RuvB allows RuvC to scan DNA until it finds its consensus sequence, where it cleaves and resolves the cruciform DNA. This Halothermothrix orenii (strain H 168 / OCM 544 / DSM 9562) protein is Crossover junction endodeoxyribonuclease RuvC.